Consider the following 88-residue polypeptide: Small ribosomal subunit protein uS17 (88 aa).

It belongs to the universal ribosomal protein uS17 family. Part of the 30S ribosomal subunit.

In terms of biological role, one of the primary rRNA binding proteins, it binds specifically to the 5'-end of 16S ribosomal RNA. In Maridesulfovibrio salexigens (strain ATCC 14822 / DSM 2638 / NCIMB 8403 / VKM B-1763) (Desulfovibrio salexigens), this protein is Small ribosomal subunit protein uS17.